A 150-amino-acid polypeptide reads, in one-letter code: Infection structure-specific protein 24 (150 aa).

Functionally, involved in the development of infection structures. The germ tube elongates across the leaf surface of the infected plant until it recognizes a stomate. Physical stimuli provided by the stomate induce differentiation of the germ tube to form a series of infection structures involved in host colonization. The sequence is that of Infection structure-specific protein 24 (INF24) from Uromyces appendiculatus (Rust fungus).